Consider the following 304-residue polypeptide: Aspartate carbamoyltransferase catalytic subunit (304 aa).

Residues arginine 55 and threonine 56 each contribute to the carbamoyl phosphate site. Lysine 84 contacts L-aspartate. Residues arginine 105, histidine 133, and glutamine 136 each contribute to the carbamoyl phosphate site. The L-aspartate site is built by arginine 165 and arginine 226. Carbamoyl phosphate contacts are provided by leucine 265 and proline 266.

Belongs to the aspartate/ornithine carbamoyltransferase superfamily. ATCase family. As to quaternary structure, heterooligomer of catalytic and regulatory chains.

The catalysed reaction is carbamoyl phosphate + L-aspartate = N-carbamoyl-L-aspartate + phosphate + H(+). It participates in pyrimidine metabolism; UMP biosynthesis via de novo pathway; (S)-dihydroorotate from bicarbonate: step 2/3. Functionally, catalyzes the condensation of carbamoyl phosphate and aspartate to form carbamoyl aspartate and inorganic phosphate, the committed step in the de novo pyrimidine nucleotide biosynthesis pathway. The chain is Aspartate carbamoyltransferase catalytic subunit from Methanothrix thermoacetophila (strain DSM 6194 / JCM 14653 / NBRC 101360 / PT) (Methanosaeta thermophila).